We begin with the raw amino-acid sequence, 361 residues long: Ribosomal RNA large subunit methyltransferase M (361 aa).

Residues Ser-187, 220–223, Asp-239, Asp-259, and Asp-276 each bind S-adenosyl-L-methionine; that span reads CPGG. The Proton acceptor role is filled by Lys-305.

This sequence belongs to the class I-like SAM-binding methyltransferase superfamily. RNA methyltransferase RlmE family. RlmM subfamily. Monomer.

It is found in the cytoplasm. It carries out the reaction cytidine(2498) in 23S rRNA + S-adenosyl-L-methionine = 2'-O-methylcytidine(2498) in 23S rRNA + S-adenosyl-L-homocysteine + H(+). Its function is as follows. Catalyzes the 2'-O-methylation at nucleotide C2498 in 23S rRNA. The protein is Ribosomal RNA large subunit methyltransferase M of Shewanella oneidensis (strain ATCC 700550 / JCM 31522 / CIP 106686 / LMG 19005 / NCIMB 14063 / MR-1).